The primary structure comprises 199 residues: ATP-dependent Clp protease proteolytic subunit (199 aa).

Residue serine 99 is the Nucleophile of the active site. Histidine 124 is an active-site residue.

The protein belongs to the peptidase S14 family. In terms of assembly, fourteen ClpP subunits assemble into 2 heptameric rings which stack back to back to give a disk-like structure with a central cavity, resembling the structure of eukaryotic proteasomes.

It is found in the cytoplasm. The enzyme catalyses Hydrolysis of proteins to small peptides in the presence of ATP and magnesium. alpha-casein is the usual test substrate. In the absence of ATP, only oligopeptides shorter than five residues are hydrolyzed (such as succinyl-Leu-Tyr-|-NHMec, and Leu-Tyr-Leu-|-Tyr-Trp, in which cleavage of the -Tyr-|-Leu- and -Tyr-|-Trp bonds also occurs).. Cleaves peptides in various proteins in a process that requires ATP hydrolysis. Has a chymotrypsin-like activity. Plays a major role in the degradation of misfolded proteins. In Lactococcus lactis subsp. cremoris (strain SK11), this protein is ATP-dependent Clp protease proteolytic subunit.